An 864-amino-acid polypeptide reads, in one-letter code: Valine--tRNA ligase (864 aa).

A 'HIGH' region motif is present at residues 42–52 (PTISGKLHIGH). The 'KMSKS' region motif lies at 589 to 593 (KMSKS). An ATP-binding site is contributed by K592.

It belongs to the class-I aminoacyl-tRNA synthetase family. ValS type 2 subfamily. As to quaternary structure, monomer.

It localises to the cytoplasm. The enzyme catalyses tRNA(Val) + L-valine + ATP = L-valyl-tRNA(Val) + AMP + diphosphate. Catalyzes the attachment of valine to tRNA(Val). As ValRS can inadvertently accommodate and process structurally similar amino acids such as threonine, to avoid such errors, it has a 'posttransfer' editing activity that hydrolyzes mischarged Thr-tRNA(Val) in a tRNA-dependent manner. This is Valine--tRNA ligase from Wolbachia pipientis wMel.